The sequence spans 337 residues: Methionyl-tRNA formyltransferase (337 aa).

Position 116–119 (116–119 (SILP)) interacts with (6S)-5,6,7,8-tetrahydrofolate.

Belongs to the Fmt family.

It carries out the reaction L-methionyl-tRNA(fMet) + (6R)-10-formyltetrahydrofolate = N-formyl-L-methionyl-tRNA(fMet) + (6S)-5,6,7,8-tetrahydrofolate + H(+). In terms of biological role, attaches a formyl group to the free amino group of methionyl-tRNA(fMet). The formyl group appears to play a dual role in the initiator identity of N-formylmethionyl-tRNA by promoting its recognition by IF2 and preventing the misappropriation of this tRNA by the elongation apparatus. This chain is Methionyl-tRNA formyltransferase, found in Desulfovibrio desulfuricans (strain ATCC 27774 / DSM 6949 / MB).